A 645-amino-acid polypeptide reads, in one-letter code: Ethylene response sensor 2 (645 aa).

The next 4 helical transmembrane spans lie at 5 to 25, 54 to 74, 86 to 106, and 125 to 145; these read LLVQWLVFFFFFLIGSVVTAA, VGDFLIAIAYFSIPIELVYFV, VVCEFIAFIVLCGMTHLLAGF, and LTGIVSFLTALSLVTLLPLLL. Cu cation-binding residues include Cys97 and His101. The region spanning 190 to 346 is the GAF domain; that stretch reads DRHTILYTTL…VVADQVAVAI (157 aa). The region spanning 389-623 is the Histidine kinase domain; the sequence is MMSDAMRCPV…VFRFQLRRSM (235 aa).

The protein belongs to the ethylene receptor family. Heteromer with ETR1. Cu cation is required as a cofactor. In terms of processing, autophosphorylated predominantly on Ser residues. Expressed in etiolated seedlings, leaves, roots and stems. Highly expressed in flowers, stamens, pollen cells, tapetum cells, carpels and ovules.

It is found in the endoplasmic reticulum membrane. In terms of biological role, ethylene receptor related to bacterial two-component regulators. Acts as a redundant negative regulator of ethylene signaling. This chain is Ethylene response sensor 2 (ERS2), found in Arabidopsis thaliana (Mouse-ear cress).